The following is a 139-amino-acid chain: Putative general secretion pathway protein B (139 aa).

A helical membrane pass occupies residues 28–48 (IIYVICLLLICLWFAGMVLVG). The disordered stretch occupies residues 93 to 139 (VEEEDDPGVAVENAPSSSEDEENTVEESEEKAGLRERVKNALNELER). The segment covering 110-121 (SEDEENTVEESE) has biased composition (acidic residues). Residues 122–139 (EKAGLRERVKNALNELER) are compositionally biased toward basic and acidic residues.

The protein resides in the cell membrane. Functionally, part of a cryptic operon that encodes proteins involved in type II secretion pathway in other organisms, but is not expressed in strain K12 under standard laboratory conditions. May play a regulatory role under conditions of derepressed gsp gene expression. In Escherichia coli (strain K12), this protein is Putative general secretion pathway protein B.